Here is a 368-residue protein sequence, read N- to C-terminus: tRNA-specific 2-thiouridylase MnmA (368 aa).

ATP-binding positions include 11–18 (GMSGGVDS) and methionine 37. Positions 97-99 (NPD) are interaction with target base in tRNA. Cysteine 102 (nucleophile) is an active-site residue. The cysteines at positions 102 and 199 are disulfide-linked. Glycine 127 is a binding site for ATP. The interaction with tRNA stretch occupies residues 149–151 (KDQ). The active-site Cysteine persulfide intermediate is cysteine 199. Residues 311-312 (RY) form an interaction with tRNA region.

The protein belongs to the MnmA/TRMU family. In terms of assembly, interacts with TusE.

The protein localises to the cytoplasm. It carries out the reaction S-sulfanyl-L-cysteinyl-[protein] + uridine(34) in tRNA + AH2 + ATP = 2-thiouridine(34) in tRNA + L-cysteinyl-[protein] + A + AMP + diphosphate + H(+). Catalyzes the 2-thiolation of uridine at the wobble position (U34) of tRNA(Lys), tRNA(Glu) and tRNA(Gln), leading to the formation of s(2)U34, the first step of tRNA-mnm(5)s(2)U34 synthesis. Sulfur is provided by IscS, via a sulfur-relay system. Binds ATP and its substrate tRNAs. The protein is tRNA-specific 2-thiouridylase MnmA of Shigella flexneri serotype 5b (strain 8401).